The sequence spans 465 residues: Intraflagellar transport protein 54 (465 aa).

Disordered regions lie at residues 119-301 (VRSN…GFTM) and 347-366 (LHGD…DKKP). The stretch at 144-207 (LEALAREKAE…KQKQQQQQQQ (64 aa)) forms a coiled coil. Positions 146 to 198 (ALAREKAEKERQRREQEQQERERKERERQEKEREEREKHELESRERAEAEQWK) are enriched in basic and acidic residues. Residues 199–220 (QKQQQQQQQQQSAISPQKSPPK) are compositionally biased toward low complexity. Residues 222-242 (RFADDDKTRVEEHQPVIERPH) are compositionally biased toward basic and acidic residues.

Belongs to the TRAF3IP1 family.

The protein resides in the cell projection. It is found in the cilium. The protein localises to the flagellum. Its subcellular location is the cytoplasm. It localises to the cytoskeleton. The protein resides in the flagellum axoneme. It is found in the flagellum basal body. Its function is as follows. Component of the intraflagellar transport complex B (IFT-B) involved in flagellar assembly. The protein is Intraflagellar transport protein 54 of Giardia intestinalis (strain ATCC 50803 / WB clone C6) (Giardia lamblia).